A 226-amino-acid polypeptide reads, in one-letter code: MPTTQKTLMFLSGFLTSLGSVVVICSILATQAWITSRIFFTDAISNGTIVITYGLFRGTSAQELNEGLQDLDKNFEVLGILDNSSQKSLHLVVILLLILSLAASVLSSVFTFYNSISNPYQTFLGPMGVYTWNGLSASFVFLAMVLFVGNAESNHLSDKLSQKLYPDTTNKRTTHTYGYSFWLTLHVIFLNIVTAVIIIFYQKARYRQKQEQRKPVEYAPRDGILF.

A helical transmembrane segment spans residues L8–L28. N46 is a glycosylation site (N-linked (GlcNAc...) asparagine). 3 helical membrane passes run V92–F112, G128–V148, and F181–Y201.

Belongs to the clarin family.

It localises to the membrane. This is Clarin-3 (Clrn3) from Mus musculus (Mouse).